We begin with the raw amino-acid sequence, 239 residues long: tRNA (guanine-N(7)-)-methyltransferase (239 aa).

Glu68, Glu93, Asp120, and Asp143 together coordinate S-adenosyl-L-methionine. The active site involves Asp143. Residues Lys147, Asp180, and 217 to 220 (TKFE) each bind substrate.

It belongs to the class I-like SAM-binding methyltransferase superfamily. TrmB family.

The enzyme catalyses guanosine(46) in tRNA + S-adenosyl-L-methionine = N(7)-methylguanosine(46) in tRNA + S-adenosyl-L-homocysteine. It functions in the pathway tRNA modification; N(7)-methylguanine-tRNA biosynthesis. Catalyzes the formation of N(7)-methylguanine at position 46 (m7G46) in tRNA. The protein is tRNA (guanine-N(7)-)-methyltransferase of Vibrio vulnificus (strain CMCP6).